The sequence spans 27 residues: Potassium channel toxin kappa-KTx 2.2 (27 aa).

2 disulfides stabilise this stretch: C3-C21 and C7-C17.

This sequence belongs to the short scorpion toxin superfamily. Potassium channel inhibitor kappa-KTx family. Kappa-KTx 2 subfamily. In terms of tissue distribution, expressed by the venom gland.

It localises to the secreted. OmTx1 decreases the amplitude of the potassium current of the rat channels Kv1.1/KCNA1 by 17% and Kv1.2/KCNA2 by 12% as well as human Kv1.3/KCNA3 by 24%. Functionally, omTx2 decreases the amplitude of the potassium current of the rat channels Kv1.1/KCNA1 by 8% and Kv1.2/KCNA2 by 10% as well as human Kv1.3/KCNA3 by 36%. Also alters glucose-induced insulin release from pancreatic islets. This is Potassium channel toxin kappa-KTx 2.2 from Opisthacanthus madagascariensis (Scorpion).